The sequence spans 161 residues: Phosphopantetheine adenylyltransferase (161 aa).

S8 contacts substrate. ATP contacts are provided by residues 8-9 and H16; that span reads SF. Substrate contacts are provided by K40, L72, and R86. ATP contacts are provided by residues 87 to 89, E97, and 122 to 128; these read GLR and FSFVSSS.

This sequence belongs to the bacterial CoaD family. Homohexamer. Mg(2+) serves as cofactor.

It localises to the cytoplasm. The enzyme catalyses (R)-4'-phosphopantetheine + ATP + H(+) = 3'-dephospho-CoA + diphosphate. Its pathway is cofactor biosynthesis; coenzyme A biosynthesis; CoA from (R)-pantothenate: step 4/5. Its function is as follows. Reversibly transfers an adenylyl group from ATP to 4'-phosphopantetheine, yielding dephospho-CoA (dPCoA) and pyrophosphate. The sequence is that of Phosphopantetheine adenylyltransferase from Thermotoga neapolitana (strain ATCC 49049 / DSM 4359 / NBRC 107923 / NS-E).